Consider the following 527-residue polypeptide: Probable T-complex protein 1 subunit beta (527 aa).

This sequence belongs to the TCP-1 chaperonin family. In terms of assembly, heterooligomeric complex of about 850 to 900 kDa that forms two stacked rings, 12 to 16 nm in diameter.

The protein resides in the cytoplasm. Its function is as follows. Molecular chaperone; assists the folding of proteins upon ATP hydrolysis. Known to play a role, in vitro, in the folding of actin and tubulin. This chain is Probable T-complex protein 1 subunit beta (cct2), found in Schizosaccharomyces pombe (strain 972 / ATCC 24843) (Fission yeast).